Here is a 640-residue protein sequence, read N- to C-terminus: DNA gyrase subunit B (640 aa).

In terms of domain architecture, Toprim spans 423–537; the sequence is AELYIVEGDS…NGNIYIAQPP (115 aa). Mg(2+) contacts are provided by E429, D502, and D504.

Belongs to the type II topoisomerase GyrB family. Heterotetramer, composed of two GyrA and two GyrB chains. In the heterotetramer, GyrA contains the active site tyrosine that forms a transient covalent intermediate with DNA, while GyrB binds cofactors and catalyzes ATP hydrolysis. Mg(2+) is required as a cofactor. It depends on Mn(2+) as a cofactor. The cofactor is Ca(2+).

Its subcellular location is the cytoplasm. The enzyme catalyses ATP-dependent breakage, passage and rejoining of double-stranded DNA.. Functionally, a type II topoisomerase that negatively supercoils closed circular double-stranded (ds) DNA in an ATP-dependent manner to modulate DNA topology and maintain chromosomes in an underwound state. Negative supercoiling favors strand separation, and DNA replication, transcription, recombination and repair, all of which involve strand separation. Also able to catalyze the interconversion of other topological isomers of dsDNA rings, including catenanes and knotted rings. Type II topoisomerases break and join 2 DNA strands simultaneously in an ATP-dependent manner. This chain is DNA gyrase subunit B, found in Spiroplasma citri.